The following is a 340-amino-acid chain: MATGKTSSAANLFTGSTRFDLSSADSPPSKLSLSSDQLNHCHQALGVFRGKIQNPDSIAHEFTGLQANRMWPSELLLNSTVAMNSVNVEKNRYSDVVPFDKNRIVLNPCKDSSAKGYVNASLIKTSESESISQFIATQGPLPHTMEDFWEMVIQQHCPIIVMLTRLVDNNRTVKCGDYFQDEDGPREFGNISLTTKWIKTTDTSLMLRNLEVNYKETEDQPMSVLHIQYPEWPDHGVPKDTVAVREILKRLYQVPPSLGPIIVHCSAGIGRTGTYCAIHNTIQRILAGDMSALDLAKTVALFRKQRIGMVQTMDQYFFCYNAIVDELEDLTAGTNAGTSS.

In terms of domain architecture, Tyrosine-protein phosphatase spans 58–326; sequence IAHEFTGLQA…FFCYNAIVDE (269 aa). Substrate contacts are provided by residues Asp-234, 265-271, and Gln-311; that span reads CSAGIGR. Residue Cys-265 is the Phosphocysteine intermediate of the active site.

Interacts with MPK6. Interacts with KIN10. In terms of processing, phosphorylated by KIN10. In terms of tissue distribution, expressed in roots, stems and flowers, and at low levels in leaves.

It localises to the cytoplasm. The protein resides in the cytosol. It is found in the nucleus. The enzyme catalyses O-phospho-L-tyrosyl-[protein] + H2O = L-tyrosyl-[protein] + phosphate. With respect to regulation, inhibited by hydrogen peroxide. In terms of biological role, protein-tyrosine-phosphatase that dephosphorylates and probably inhibits MPK6 in non-oxidative stress conditions. In association with MKP1, represses salicylic acid (SA) and camalexin biosynthesis, thus modulating defense response. May also repress MPK3. Dephosphorylates and inactivates MPK4 in vitro. The chain is Protein-tyrosine-phosphatase PTP1 (PTP1) from Arabidopsis thaliana (Mouse-ear cress).